A 533-amino-acid chain; its full sequence is MASPVADASRRRREKRRQLDARRSKCRIRLGGHMEQWCLLKERLGFSLHSQLAKFLLDRYTSSGCVLCAGPEPVPQKGLQYLVLLSHTHSRECSLVPGLRGPGGGEGELVWECSAGHTFSWEPSLIPTPSEVPKQAPLTHTTERTWCSEARRKQEAEGLECEHRERTQETRLSRRVEPPLETDPSVGEDQVVEEEEEEEEEEEEEELLSDASPWTYSSSPDDSEPDVPRPPPSPVTHTPKEGEIPPVPATLPTPCAVLASLGSTAALTSDTEVQMELSRTSQVPAELQMTESLDSPGSQAQSAPNPTCDEDTAQIGLRRIRKAAKRELMPCDFPGCGRIFSNRQYLNHHKKYQHIHQKSFCCPEPACGKSFNFKKHLKEHVKLHSDARDYICEFCARSFRTSSNLVIHRRIHTGEKPLQCEICGFTCRQKASLNWHRRKHAETAAALRFPCEFCGKRFEKPDSVVAHCSKSHPALLPVQESPGSLGSSPSISAPEPLQSPEGTSFSTSYDSNPAPSTSISSPGVPAPRNTEKS.

Disordered stretches follow at residues 124–251 (SLIP…PATL) and 290–310 (TESL…TCDE). Residues 149–178 (EARRKQEAEGLECEHRERTQETRLSRRVEP) are compositionally biased toward basic and acidic residues. Residues 190–208 (QVVEEEEEEEEEEEEEELL) are compositionally biased toward acidic residues. S233 is modified (phosphoserine). The segment covering 290-305 (TESLDSPGSQAQSAPN) has biased composition (polar residues). 5 C2H2-type zinc fingers span residues 329–354 (MPCD…KYQH), 360–384 (FCCP…VKLH), 390–412 (YICE…RRIH), 418–440 (LQCE…RRKH), and 449–472 (FPCE…SKSH). A Phosphoserine modification is found at S471. Residues 478–533 (VQESPGSLGSSPSISAPEPLQSPEGTSFSTSYDSNPAPSTSISSPGVPAPRNTEKS) are disordered. The segment covering 481–492 (SPGSLGSSPSIS) has biased composition (low complexity). Over residues 500–521 (PEGTSFSTSYDSNPAPSTSISS) the composition is skewed to polar residues.

Belongs to the krueppel C2H2-type zinc-finger protein family. Post-translationally, phosphorylation at Ser-471 results in loss of DNA-binding activity.

It is found in the nucleus. In terms of biological role, may act as an transcriptional repressor for PCK1 gene expression, in turns may participate in the hepatic gluconeogenesis regulation through the activated AMPK signaling pathway. This Rattus norvegicus (Rat) protein is Zinc finger protein 692.